A 62-amino-acid chain; its full sequence is Photosystem II reaction center protein Z (62 aa).

A run of 2 helical transmembrane segments spans residues 8–28 (AVFA…VVFA) and 41–61 (FSGT…NSLI).

Belongs to the PsbZ family. As to quaternary structure, PSII is composed of 1 copy each of membrane proteins PsbA, PsbB, PsbC, PsbD, PsbE, PsbF, PsbH, PsbI, PsbJ, PsbK, PsbL, PsbM, PsbT, PsbY, PsbZ, Psb30/Ycf12, at least 3 peripheral proteins of the oxygen-evolving complex and a large number of cofactors. It forms dimeric complexes.

Its subcellular location is the plastid. It localises to the chloroplast thylakoid membrane. Functionally, may control the interaction of photosystem II (PSII) cores with the light-harvesting antenna, regulates electron flow through the 2 photosystem reaction centers. PSII is a light-driven water plastoquinone oxidoreductase, using light energy to abstract electrons from H(2)O, generating a proton gradient subsequently used for ATP formation. This Nymphaea alba (White water-lily) protein is Photosystem II reaction center protein Z.